The sequence spans 158 residues: Interleukin-36 alpha (158 aa).

Residues 1–5 (MEKAL) constitute a propeptide that is removed on maturation. Position 96 is a 3'-nitrotyrosine (Tyr-96).

The protein belongs to the IL-1 family. Interacts with TMED10; the interaction mediates the translocation from the cytoplasm into the ERGIC (endoplasmic reticulum-Golgi intermediate compartment) and thereby secretion. Post-translationally, N-terminal truncation leads to a dramatic enhancement of its activity (&gt;1000-fold). In terms of tissue distribution, expressed in immune system and fetal brain, but not in other tissues tested or in multiple hematopoietic cell lines. Predominantly expressed in skin keratinocytes but not in fibroblasts, endothelial cells or melanocytes. Increased in lesional psoriasis skin.

The protein localises to the cytoplasm. The protein resides in the secreted. Its function is as follows. Cytokine that binds to and signals through the IL1RL2/IL-36R receptor which in turn activates NF-kappa-B and MAPK signaling pathways in target cells linked to a pro-inflammatory response. Part of the IL-36 signaling system that is thought to be present in epithelial barriers and to take part in local inflammatory response; similar to the IL-1 system with which it shares the coreceptor IL1RAP. Seems to be involved in skin inflammatory response by acting on keratinocytes, dendritic cells and indirectly on T-cells to drive tissue infiltration, cell maturation and cell proliferation. In cultured keratinocytes induces the expression of macrophage, T-cell, and neutrophil chemokines, such as CCL3, CCL4, CCL5, CCL2, CCL17, CCL22, CL20, CCL5, CCL2, CCL17, CCL22, CXCL8, CCL20 and CXCL1, and the production of pro-inflammatory cytokines such as TNF-alpha, IL-8 and IL-6. In cultured monocytes up-regulates expression of IL-1A, IL-1B and IL-6. In myeloid dendritic cells involved in cell maturation by up-regulating surface expression of CD83, CD86 and HLA-DR. In monocyte-derived dendritic cells facilitates dendritic cell maturation and drives T-cell proliferation. May play a role in pro-inflammatory effects in the lung. The polypeptide is Interleukin-36 alpha (Homo sapiens (Human)).